The sequence spans 143 residues: Ribonuclease HI (143 aa).

Residues Met1–Gln136 form the RNase H type-1 domain. The Mg(2+) site is built by Asp9, Glu47, Asp69, and Asn128.

Belongs to the RNase H family. In terms of assembly, monomer. Requires Mg(2+) as cofactor.

It localises to the cytoplasm. The enzyme catalyses Endonucleolytic cleavage to 5'-phosphomonoester.. Endonuclease that specifically degrades the RNA of RNA-DNA hybrids. The protein is Ribonuclease HI (rnhA) of Helicobacter pylori (strain J99 / ATCC 700824) (Campylobacter pylori J99).